We begin with the raw amino-acid sequence, 435 residues long: MRVFRGEVTTLPPDKSISHRAAMIAALSEGTTEITNFSAGFDNQSTLGVLRNAGIVVQQEEVQGAHGRTMRRVVITSNGLWSFTPPTAPLQCNNSGSTMRMMSGILAAQPFQCTLIGDASLMKRPMKRVADPLRQMGATIELSPDGTAPIHISGTKELRSLEYRLPVASAQVKSLIAFAALHAEGETRIIEPLQSRDHTEVMLGLETIVKKDERIIVVPGQQRIAAKPFFIPADPSAACFIIALGLLARGSEIVIRDVCLNPTRAAYLDLLAEAKAGIGVDNQRVIGGEIIGDILIDNLNGIEPLHISDPQLVAFIIDEIPMLAVLSAFATGSFELHNAAELRTKESDRIEALVVNLQRLGFACEQYPDGFVVKKRTEVPQGKVTIESFDDHRIAMSFAIAAQATGEALDISDIEVVGVSFPNFFSLLEELSSEA.

3-phosphoshikimate contacts are provided by lysine 15, serine 16, and arginine 20. Lysine 15 lines the phosphoenolpyruvate pocket. The phosphoenolpyruvate site is built by glycine 96 and arginine 124. 5 residues coordinate 3-phosphoshikimate: serine 169, glutamine 171, serine 195, aspartate 318, and lysine 345. A phosphoenolpyruvate-binding site is contributed by glutamine 171. The Proton acceptor role is filled by aspartate 318. 2 residues coordinate phosphoenolpyruvate: arginine 349 and arginine 393.

The protein belongs to the EPSP synthase family. As to quaternary structure, monomer.

The protein resides in the cytoplasm. It carries out the reaction 3-phosphoshikimate + phosphoenolpyruvate = 5-O-(1-carboxyvinyl)-3-phosphoshikimate + phosphate. The protein operates within metabolic intermediate biosynthesis; chorismate biosynthesis; chorismate from D-erythrose 4-phosphate and phosphoenolpyruvate: step 6/7. Catalyzes the transfer of the enolpyruvyl moiety of phosphoenolpyruvate (PEP) to the 5-hydroxyl of shikimate-3-phosphate (S3P) to produce enolpyruvyl shikimate-3-phosphate and inorganic phosphate. This is 3-phosphoshikimate 1-carboxyvinyltransferase from Chlorobium chlorochromatii (strain CaD3).